The primary structure comprises 178 residues: Hypoxanthine phosphoribosyltransferase (178 aa).

Arginine 43 and glycine 44 together coordinate diphosphate. Glutamate 99 contacts GMP. An IMP-binding site is contributed by glutamate 99. Mg(2+) contacts are provided by glutamate 99 and aspartate 100. The Proton acceptor role is filled by aspartate 103. GMP-binding positions include 103–108 (DSGNTL), lysine 131, and aspartate 159. Residues 103–108 (DSGNTL) and lysine 131 each bind IMP. Arginine 165 is a diphosphate binding site.

This sequence belongs to the purine/pyrimidine phosphoribosyltransferase family. As to quaternary structure, homotetramer. Requires Mg(2+) as cofactor.

It localises to the cytoplasm. It carries out the reaction IMP + diphosphate = hypoxanthine + 5-phospho-alpha-D-ribose 1-diphosphate. The catalysed reaction is GMP + diphosphate = guanine + 5-phospho-alpha-D-ribose 1-diphosphate. It participates in purine metabolism; IMP biosynthesis via salvage pathway; IMP from hypoxanthine: step 1/1. Its function is as follows. Purine salvage pathway enzyme which catalyzes the transfer of the ribosyl-5-phosphate group from 5-phospho-alpha-D-ribose 1-diphosphate (PRPP) to the N9 position of hypoxanthine to yield IMP (inosine 5'-monophosphate). To a lesser extent, can also act on guanine leading to GMP, but shows a highly less efficient activity with xanthine. The polypeptide is Hypoxanthine phosphoribosyltransferase (hpt) (Shigella flexneri).